Here is a 208-residue protein sequence, read N- to C-terminus: UPF0637 protein BCG9842_B1177 (208 aa).

The protein belongs to the UPF0637 family.

In Bacillus cereus (strain G9842), this protein is UPF0637 protein BCG9842_B1177.